Reading from the N-terminus, the 579-residue chain is Altered inheritance of mitochondria protein 9, mitochondrial (579 aa).

Residues 1-36 (MQSWNSQSFLSSHFTMLRYACKRAVPRLNAASGLRF) constitute a mitochondrion transit peptide.

This sequence belongs to the AIM9 family.

It is found in the mitochondrion. This chain is Altered inheritance of mitochondria protein 9, mitochondrial (AIM9), found in Yarrowia lipolytica (strain CLIB 122 / E 150) (Yeast).